The following is a 618-amino-acid chain: 1-deoxy-D-xylulose-5-phosphate synthase (618 aa).

Thiamine diphosphate contacts are provided by residues His-76 and 117–119 (GHS). Asp-148 provides a ligand contact to Mg(2+). Thiamine diphosphate-binding positions include 149 to 150 (GA), Asn-177, Tyr-284, and Glu-366. Asn-177 contacts Mg(2+).

It belongs to the transketolase family. DXPS subfamily. As to quaternary structure, homodimer. Mg(2+) serves as cofactor. The cofactor is thiamine diphosphate.

It carries out the reaction D-glyceraldehyde 3-phosphate + pyruvate + H(+) = 1-deoxy-D-xylulose 5-phosphate + CO2. Its pathway is metabolic intermediate biosynthesis; 1-deoxy-D-xylulose 5-phosphate biosynthesis; 1-deoxy-D-xylulose 5-phosphate from D-glyceraldehyde 3-phosphate and pyruvate: step 1/1. Its function is as follows. Catalyzes the acyloin condensation reaction between C atoms 2 and 3 of pyruvate and glyceraldehyde 3-phosphate to yield 1-deoxy-D-xylulose-5-phosphate (DXP). This chain is 1-deoxy-D-xylulose-5-phosphate synthase, found in Dechloromonas aromatica (strain RCB).